The chain runs to 153 residues: uncharacterized protein (153 aa).

Residues 1–19 (MRKYIPLVLFIFSWPVLCA) form the signal peptide. Active-site residues include arginine 46, glutamate 54, and arginine 88.

This sequence belongs to the thermonuclease family.

This is an uncharacterized protein from Escherichia coli.